Here is a 406-residue protein sequence, read N- to C-terminus: Phosphopentomutase (406 aa).

6 residues coordinate Mn(2+): Asp10, Asp305, His310, Asp346, His347, and His358.

This sequence belongs to the phosphopentomutase family. The cofactor is Mn(2+).

It localises to the cytoplasm. It catalyses the reaction 2-deoxy-alpha-D-ribose 1-phosphate = 2-deoxy-D-ribose 5-phosphate. The enzyme catalyses alpha-D-ribose 1-phosphate = D-ribose 5-phosphate. It functions in the pathway carbohydrate degradation; 2-deoxy-D-ribose 1-phosphate degradation; D-glyceraldehyde 3-phosphate and acetaldehyde from 2-deoxy-alpha-D-ribose 1-phosphate: step 1/2. Functionally, isomerase that catalyzes the conversion of deoxy-ribose 1-phosphate (dRib-1-P) and ribose 1-phosphate (Rib-1-P) to deoxy-ribose 5-phosphate (dRib-5-P) and ribose 5-phosphate (Rib-5-P), respectively. In Rhizobium meliloti (strain 1021) (Ensifer meliloti), this protein is Phosphopentomutase.